Reading from the N-terminus, the 477-residue chain is Argininosuccinate lyase (477 aa).

It belongs to the lyase 1 family. Argininosuccinate lyase subfamily.

The protein localises to the cytoplasm. It catalyses the reaction 2-(N(omega)-L-arginino)succinate = fumarate + L-arginine. The protein operates within amino-acid biosynthesis; L-arginine biosynthesis; L-arginine from L-ornithine and carbamoyl phosphate: step 3/3. This is Argininosuccinate lyase from Corynebacterium diphtheriae (strain ATCC 700971 / NCTC 13129 / Biotype gravis).